Consider the following 1376-residue polypeptide: DNA-directed RNA polymerase subunit beta (1376 aa).

Residues 1357–1368 (NSKTGRQTNPGT) show a composition bias toward polar residues. The disordered stretch occupies residues 1357 to 1376 (NSKTGRQTNPGTRENLPAAE).

It belongs to the RNA polymerase beta chain family. In terms of assembly, the RNAP catalytic core consists of 2 alpha, 1 beta, 1 beta' and 1 omega subunit. When a sigma factor is associated with the core the holoenzyme is formed, which can initiate transcription.

It carries out the reaction RNA(n) + a ribonucleoside 5'-triphosphate = RNA(n+1) + diphosphate. Functionally, DNA-dependent RNA polymerase catalyzes the transcription of DNA into RNA using the four ribonucleoside triphosphates as substrates. In Azorhizobium caulinodans (strain ATCC 43989 / DSM 5975 / JCM 20966 / LMG 6465 / NBRC 14845 / NCIMB 13405 / ORS 571), this protein is DNA-directed RNA polymerase subunit beta.